A 558-amino-acid polypeptide reads, in one-letter code: MEEGHKEPLVLRVEGSHCSLSEMDDFDLTRALEKPRQLKIERKRSFDERSMSELSTGYVRQDSILEMAHSPGSRSMVDTPLSVRNSFEPHPMVAEAWEALRRSMVFFRGQPVGTIAAYDHASEEVLNYDQVFVRDFVPSALAFLMNGEPDIVKNFLLKTLQLQGWEKRVDRFKLGEGVMPASFKVLHDPVRKTDTIIADFGESAIGRVAPVDSGFWWIILLRAYTKSTGDLTLSETPECQRGMRLILSLCLSEGFDTFPTLLCADGCSMVDRRMGVYGYPIEIQALFFMALRCALSMLKPDEEGRDFIERIVKRLHALSFHMRSYFWLDFQQLNDIYRYKTEEYSHTAVNKFNVMPDSIPDWVFDFMPLRGGYFVGNVSPARMDFRWFSLGNCVSILSSLATPDQSMAIMDLLEHRWEELVGEMPLKICYPCIESHEWRIVTGCDPKNTRWSYHNGGSWPVLLWTLTAACIKTGRPQIARRAIDLIESRLHRDCWPEYYDGKQGRYVGKQARKYQTWSIAGYLVAKMMLEDPSHIGMISLEEDKQMKPVIKRSASWTC.

Residues Ser-16, Ser-19, and Ser-50 each carry the phosphoserine modification. Thr-79 carries the phosphothreonine modification. Position 555 is a phosphoserine (Ser-555).

This sequence belongs to the glycosyl hydrolase 100 family.

The protein resides in the cytoplasm. It localises to the cytosol. It carries out the reaction Hydrolysis of terminal non-reducing beta-D-fructofuranoside residues in beta-D-fructofuranosides.. Functionally, cytosolic invertase that may cleave sucrose into glucose and fructose, and that is involved in the regulation of root growth. May regulate sugar-mediated root development by controlling sucrose catabolism in root cells. This Arabidopsis thaliana (Mouse-ear cress) protein is Alkaline/neutral invertase CINV2.